The sequence spans 77 residues: Dermatoxin-A1 (77 aa).

An N-terminal signal peptide occupies residues 1–22 (MAFLKKSLFLVLFLGLVPLFLC). The propeptide occupies 23-42 (ENEKREGENEKEENDDQSEE). At glutamine 76 the chain carries Glutamine amide.

The protein belongs to the frog skin active peptide (FSAP) family. Dermatoxin subfamily. In terms of tissue distribution, expressed by the skin glands.

The protein localises to the secreted. Its function is as follows. Possesses a potent antimicrobial activity against Gram-positive and Gram-negative bacteria. Probably acts by disturbing membrane functions with its amphipathic structure. The protein is Dermatoxin-A1 of Agalychnis annae (Blue-sided leaf frog).